The primary structure comprises 66 residues: Large ribosomal subunit protein bL31 (66 aa).

Zn(2+)-binding residues include C16, C18, C36, and C39.

The protein belongs to the bacterial ribosomal protein bL31 family. Type A subfamily. In terms of assembly, part of the 50S ribosomal subunit. The cofactor is Zn(2+).

In terms of biological role, binds the 23S rRNA. The protein is Large ribosomal subunit protein bL31 of Campylobacter hominis (strain ATCC BAA-381 / DSM 21671 / CCUG 45161 / LMG 19568 / NCTC 13146 / CH001A).